We begin with the raw amino-acid sequence, 317 residues long: Aspartate carbamoyltransferase catalytic subunit (317 aa).

Residues R64 and T65 each coordinate carbamoyl phosphate. K92 serves as a coordination point for L-aspartate. Carbamoyl phosphate is bound by residues R114, H144, and Q147. The L-aspartate site is built by R177 and R232. Carbamoyl phosphate-binding residues include G273 and P274.

This sequence belongs to the aspartate/ornithine carbamoyltransferase superfamily. ATCase family. As to quaternary structure, heterododecamer (2C3:3R2) of six catalytic PyrB chains organized as two trimers (C3), and six regulatory PyrI chains organized as three dimers (R2).

The catalysed reaction is carbamoyl phosphate + L-aspartate = N-carbamoyl-L-aspartate + phosphate + H(+). It participates in pyrimidine metabolism; UMP biosynthesis via de novo pathway; (S)-dihydroorotate from bicarbonate: step 2/3. In terms of biological role, catalyzes the condensation of carbamoyl phosphate and aspartate to form carbamoyl aspartate and inorganic phosphate, the committed step in the de novo pyrimidine nucleotide biosynthesis pathway. This chain is Aspartate carbamoyltransferase catalytic subunit, found in Thiobacillus denitrificans (strain ATCC 25259 / T1).